The sequence spans 411 residues: LL-diaminopimelate aminotransferase (411 aa).

Residues Tyr16 and Gly43 each contribute to the substrate site. Residues Tyr73, 109 to 110 (AK), Tyr133, Asn188, Tyr219, and 247 to 249 (SYS) contribute to the pyridoxal 5'-phosphate site. Substrate is bound by residues Lys110, Tyr133, and Asn188. The residue at position 250 (Lys250) is an N6-(pyridoxal phosphate)lysine. The pyridoxal 5'-phosphate site is built by Arg258 and Asn293. Substrate-binding residues include Asn293 and Arg389.

Belongs to the class-I pyridoxal-phosphate-dependent aminotransferase family. LL-diaminopimelate aminotransferase subfamily. Homodimer. Pyridoxal 5'-phosphate is required as a cofactor.

The catalysed reaction is (2S,6S)-2,6-diaminopimelate + 2-oxoglutarate = (S)-2,3,4,5-tetrahydrodipicolinate + L-glutamate + H2O + H(+). It functions in the pathway amino-acid biosynthesis; L-lysine biosynthesis via DAP pathway; LL-2,6-diaminopimelate from (S)-tetrahydrodipicolinate (aminotransferase route): step 1/1. In terms of biological role, involved in the synthesis of meso-diaminopimelate (m-DAP or DL-DAP), required for both lysine and peptidoglycan biosynthesis. Catalyzes the direct conversion of tetrahydrodipicolinate to LL-diaminopimelate. This is LL-diaminopimelate aminotransferase from Methanosphaera stadtmanae (strain ATCC 43021 / DSM 3091 / JCM 11832 / MCB-3).